Here is a 223-residue protein sequence, read N- to C-terminus: Oxaloacetate tautomerase FAHD1, mitochondrial (223 aa).

Residues 1–30 (MATSMIQRMFKQGTKIVCVGRNYAAHAKEL) constitute a mitochondrion transit peptide. Residues glutamate 67, glutamate 69, and aspartate 98 each coordinate Mg(2+).

This sequence belongs to the FAH family. It depends on Mg(2+) as a cofactor. Requires Mn(2+) as cofactor.

It is found in the mitochondrion. It catalyses the reaction oxaloacetate = enol-oxaloacetate. Functionally, tautomerase that converts enol-oxaloacetate, a strong inhibitor of succinate dehydrogenase, to the physiological keto form of oxaloacetate. In Arabidopsis thaliana (Mouse-ear cress), this protein is Oxaloacetate tautomerase FAHD1, mitochondrial.